Here is a 388-residue protein sequence, read N- to C-terminus: Mitochondrial distribution and morphology protein 12 (388 aa).

The SMP-LTD domain occupies 1-388 (MSLDINWSLL…VFPNFHTVAL (388 aa)). Disordered stretches follow at residues 75-101 (DDEG…RNEA) and 209-251 (PMSI…SSSS). Positions 83–101 (EEKQREKEREERDKLRNEA) are enriched in basic and acidic residues. Residues 234-243 (PSPPAHPAGL) are compositionally biased toward pro residues.

This sequence belongs to the MDM12 family. As to quaternary structure, component of the ER-mitochondria encounter structure (ERMES) or MDM complex, composed of MMM1, MDM10, MDM12 and MDM34. An MMM1 homodimer associates with one molecule of MDM12 on each side in a pairwise head-to-tail manner, and the SMP-LTD domains of MMM1 and MDM12 generate a continuous hydrophobic tunnel for phospholipid trafficking.

It localises to the mitochondrion outer membrane. It is found in the endoplasmic reticulum membrane. Its function is as follows. Component of the ERMES/MDM complex, which serves as a molecular tether to connect the endoplasmic reticulum (ER) and mitochondria. Components of this complex are involved in the control of mitochondrial shape and protein biogenesis, and function in nonvesicular lipid trafficking between the ER and mitochondria. MDM12 is required for the interaction of the ER-resident membrane protein MMM1 and the outer mitochondrial membrane-resident beta-barrel protein MDM10. The MDM12-MMM1 subcomplex functions in the major beta-barrel assembly pathway that is responsible for biogenesis of all mitochondrial outer membrane beta-barrel proteins, and acts in a late step after the SAM complex. The MDM10-MDM12-MMM1 subcomplex further acts in the TOM40-specific pathway after the action of the MDM12-MMM1 complex. Essential for establishing and maintaining the structure of mitochondria and maintenance of mtDNA nucleoids. The chain is Mitochondrial distribution and morphology protein 12 from Cryptococcus neoformans var. neoformans serotype D (strain B-3501A) (Filobasidiella neoformans).